The following is a 466-amino-acid chain: Ribulose bisphosphate carboxylase large chain (466 aa).

Lys5 is subject to N6,N6,N6-trimethyllysine. 2 residues coordinate substrate: Asn114 and Thr164. The active-site Proton acceptor is the Lys166. Position 168 (Lys168) interacts with substrate. Lys192, Asp194, and Glu195 together coordinate Mg(2+). Lys192 bears the N6-carboxylysine mark. His285 acts as the Proton acceptor in catalysis. The substrate site is built by Arg286, His318, and Ser370.

Belongs to the RuBisCO large chain family. Type I subfamily. Heterohexadecamer of 8 large chains and 8 small chains; disulfide-linked. The disulfide link is formed within the large subunit homodimers. Mg(2+) serves as cofactor. The disulfide bond which can form in the large chain dimeric partners within the hexadecamer appears to be associated with oxidative stress and protein turnover.

The protein resides in the plastid. The protein localises to the chloroplast. The catalysed reaction is 2 (2R)-3-phosphoglycerate + 2 H(+) = D-ribulose 1,5-bisphosphate + CO2 + H2O. It catalyses the reaction D-ribulose 1,5-bisphosphate + O2 = 2-phosphoglycolate + (2R)-3-phosphoglycerate + 2 H(+). RuBisCO catalyzes two reactions: the carboxylation of D-ribulose 1,5-bisphosphate, the primary event in carbon dioxide fixation, as well as the oxidative fragmentation of the pentose substrate in the photorespiration process. Both reactions occur simultaneously and in competition at the same active site. The sequence is that of Ribulose bisphosphate carboxylase large chain from Cucurbita pepo (Vegetable marrow).